The following is a 221-amino-acid chain: MRLILLGAPGAGKGTQAKFICEKFGIPQISTGDMLRAAVKAGTPLGVEAKKVMDAGGLVSDDIIIGLVKDRLKEDDCKNGYLFDGFPRTIPQAEAMKEAGVAIDYVLEIDVPFDAIIERMSGRRVHVASGRTYHVKYNPPKTEGVDDETGEALIQRDDDKEETVKKRLDVYSQQTRPLVDYYSEWAAKGDASAKVAPPQYRKILGVGNVDEITARVFEALK.

Position 10-15 (10-15 (GAGKGT)) interacts with ATP. Residues 30–59 (STGDMLRAAVKAGTPLGVEAKKVMDAGGLV) are NMP. Residues threonine 31, arginine 36, 57–59 (GLV), 85–88 (GFPR), and glutamine 92 contribute to the AMP site. The interval 122 to 159 (GRRVHVASGRTYHVKYNPPKTEGVDDETGEALIQRDDD) is LID. ATP is bound by residues arginine 123 and 132–133 (TY). 2 residues coordinate AMP: arginine 156 and arginine 167. Glycine 207 serves as a coordination point for ATP.

Belongs to the adenylate kinase family. Monomer.

It is found in the cytoplasm. It carries out the reaction AMP + ATP = 2 ADP. It functions in the pathway purine metabolism; AMP biosynthesis via salvage pathway; AMP from ADP: step 1/1. Catalyzes the reversible transfer of the terminal phosphate group between ATP and AMP. Plays an important role in cellular energy homeostasis and in adenine nucleotide metabolism. This Cupriavidus necator (strain ATCC 17699 / DSM 428 / KCTC 22496 / NCIMB 10442 / H16 / Stanier 337) (Ralstonia eutropha) protein is Adenylate kinase.